A 119-amino-acid chain; its full sequence is Large ribosomal subunit protein uL18 (119 aa).

The protein belongs to the universal ribosomal protein uL18 family. As to quaternary structure, part of the 50S ribosomal subunit; part of the 5S rRNA/L5/L18/L25 subcomplex. Contacts the 5S and 23S rRNAs.

In terms of biological role, this is one of the proteins that bind and probably mediate the attachment of the 5S RNA into the large ribosomal subunit, where it forms part of the central protuberance. The sequence is that of Large ribosomal subunit protein uL18 from Legionella pneumophila (strain Paris).